The sequence spans 211 residues: FMN-dependent NADH:quinone oxidoreductase 2 (211 aa).

FMN-binding positions include S10 and 17 to 19 (SRS).

Belongs to the azoreductase type 1 family. In terms of assembly, homodimer. It depends on FMN as a cofactor.

The enzyme catalyses 2 a quinone + NADH + H(+) = 2 a 1,4-benzosemiquinone + NAD(+). It catalyses the reaction N,N-dimethyl-1,4-phenylenediamine + anthranilate + 2 NAD(+) = 2-(4-dimethylaminophenyl)diazenylbenzoate + 2 NADH + 2 H(+). Its function is as follows. Quinone reductase that provides resistance to thiol-specific stress caused by electrophilic quinones. In terms of biological role, also exhibits azoreductase activity. Catalyzes the reductive cleavage of the azo bond in aromatic azo compounds to the corresponding amines. The sequence is that of FMN-dependent NADH:quinone oxidoreductase 2 from Listeria monocytogenes serovar 1/2a (strain ATCC BAA-679 / EGD-e).